We begin with the raw amino-acid sequence, 298 residues long: Tyrosine recombinase XerC (298 aa).

A Core-binding (CB) domain is found at 2-88 (TDLHTDVERY…ALRSFFDWLV (87 aa)). Residues 109-288 (HLPKNIDVDD…DFQHLASVYD (180 aa)) enclose the Tyr recombinase domain. Catalysis depends on residues R148, K172, H240, R243, and H266. Y275 serves as the catalytic O-(3'-phospho-DNA)-tyrosine intermediate.

It belongs to the 'phage' integrase family. XerC subfamily. In terms of assembly, forms a cyclic heterotetrameric complex composed of two molecules of XerC and two molecules of XerD, in which XerC interacts with XerD via its C-terminal region, XerD interacts with XerC via its C-terminal region and so on.

Its subcellular location is the cytoplasm. With respect to regulation, ftsK may regulate the catalytic switch between XerC and XerD in the heterotetrameric complex during the two steps of the recombination process. Site-specific tyrosine recombinase, which acts by catalyzing the cutting and rejoining of the recombining DNA molecules. Binds cooperatively to specific DNA consensus sequences that are separated from XerD binding sites by a short central region, forming the heterotetrameric XerC-XerD complex that recombines DNA substrates. The complex is essential to convert dimers of the bacterial chromosome into monomers to permit their segregation at cell division. It also contributes to the segregational stability of plasmids. In the complex XerC specifically exchanges the top DNA strands. This is Tyrosine recombinase XerC from Escherichia coli O45:K1 (strain S88 / ExPEC).